Reading from the N-terminus, the 106-residue chain is Protein RnfH (106 aa).

Belongs to the UPF0125 (RnfH) family.

The polypeptide is Protein RnfH (Ectopseudomonas mendocina (strain ymp) (Pseudomonas mendocina)).